A 319-amino-acid polypeptide reads, in one-letter code: Annexin A4 (319 aa).

An N-acetylalanine modification is found at Ala2. Position 7 is a phosphothreonine (Thr7). Ser12 carries the post-translational modification Phosphoserine. 4 Annexin repeats span residues 14–85 (FSAT…GMIT), 86–157 (PTVL…SLSA), 169–241 (ALMR…AIVK), and 245–316 (NKSA…ILCG). N6-acetyllysine occurs at positions 213, 293, and 300.

Belongs to the annexin family. In terms of tissue distribution, expressed in pancreas (at protein level). Also detected in liver, spleen, intestine, stomach, kidney, and adrenal glands.

It localises to the zymogen granule membrane. Functionally, calcium/phospholipid-binding protein which promotes membrane fusion and is involved in exocytosis. The protein is Annexin A4 (ANXA4) of Canis lupus familiaris (Dog).